A 127-amino-acid polypeptide reads, in one-letter code: Cytochrome c' (127 aa).

Pyrrolidone carboxylic acid is present on Gln1. Positions 12, 13, 67, 116, 119, and 120 each coordinate heme c.

In terms of assembly, homodimer. Post-translationally, binds 1 heme c group covalently per subunit.

It localises to the periplasm. Its function is as follows. Cytochrome c' is the most widely occurring bacterial c-type cytochrome. Cytochromes c' are high-spin proteins and the heme has no sixth ligand. Their exact function is not known. The polypeptide is Cytochrome c' (Alcaligenes xylosoxydans xylosoxydans (Achromobacter xylosoxidans)).